The chain runs to 103 residues: MYAVIENGGKQYRVTVGDKLRLERMEMEPGAELALDRVLMVGVGDDVQVGRPLVEGAAVKATVLSQGRAKKVHIFKMRRRKHYRKQQGHRQYFTEVRITGIEA.

Belongs to the bacterial ribosomal protein bL21 family. As to quaternary structure, part of the 50S ribosomal subunit. Contacts protein L20.

This protein binds to 23S rRNA in the presence of protein L20. The chain is Large ribosomal subunit protein bL21 from Acidithiobacillus ferrooxidans (strain ATCC 23270 / DSM 14882 / CIP 104768 / NCIMB 8455) (Ferrobacillus ferrooxidans (strain ATCC 23270)).